Consider the following 68-residue polypeptide: Copper transport protein ATOX1 (68 aa).

Residues 1 to 63 form the HMA domain; sequence MPKHEFSVDM…TLEKTGKAVS (63 aa). Cysteine 12 and cysteine 15 together coordinate Cu cation. Serine 47 carries the post-translational modification Phosphoserine. Lysine 60 is modified (N6-acetyllysine).

This sequence belongs to the ATX1 family. In terms of assembly, homodimer. Interacts with ATP7B. Interacts with ATP7A. Interacts (via dimer form) with SLC31A1 (via C-terminal domain); this interaction improves ATOX1 stability and controls intracellular Cu(I) levels.

In terms of biological role, binds and deliver cytosolic copper to the copper ATPase proteins. May be important in cellular antioxidant defense. This chain is Copper transport protein ATOX1, found in Canis lupus familiaris (Dog).